The sequence spans 793 residues: Facilitated trehalose transporter Tret1 (793 aa).

Over 1-326 (MNRKVGPVLE…LEVYRPTTNP (326 aa)) the chain is Cytoplasmic. Disordered regions lie at residues 99-148 (EKAK…EHKS) and 213-235 (RHIS…FEPS). The span at 104–113 (KSSLKSSRVS) shows a compositional bias: low complexity. A compositionally biased stretch (acidic residues) spans 115–125 (DQEDDRFDEDE). The span at 213–223 (RHISFKFDKEP) shows a compositional bias: basic and acidic residues. Residues 327-347 (IYIWTQVLAALSVSLGSMVVG) traverse the membrane as a helical segment. Over 348 to 376 (FSSAYTSPALVSMKDRNITSFEVTDQSGS) the chain is Extracellular. A glycan (N-linked (GlcNAc...) asparagine) is linked at Asn-364. Residues 377–397 (WVGGIMPLAGLAGGILGGPMI) form a helical membrane-spanning segment. Topologically, residues 398-411 (EYLGRKNTILATAT) are cytoplasmic. The helical transmembrane segment at 412-432 (PFIISWLLIGCATHVAMVLVG) threads the bilayer. The Extracellular portion of the chain corresponds to 433-434 (RA). The helical transmembrane segment at 435-455 (LSGLCVGIASLSLPVYLGETV) threads the bilayer. Residues 456–460 (QPEVR) are Cytoplasmic-facing. A helical transmembrane segment spans residues 461–481 (GTLGLLPTAFGNIGILLCFVA). Over 482–488 (GKYLDWS) the chain is Extracellular. A helical membrane pass occupies residues 489–509 (GLAFLGAALPIPFLLLMFLIP). The Cytoplasmic segment spans residues 510 to 572 (ETPRWYVSRN…DLLNKANLKP (63 aa)). The helical transmembrane segment at 573–593 (LLISLGLMFFQQLSGINAVIF) threads the bilayer. Over 594–609 (YTVQIFQSAGSTIDEK) the chain is Extracellular. A helical membrane pass occupies residues 610–630 (LCTIIVGVVNFIATFIATVLI). The Cytoplasmic segment spans residues 631-636 (DRLGRK). The chain crosses the membrane as a helical span at residues 637–657 (ILLYISDVAMIITLMTLGTFF). At 658–668 (YMKNNGDDVSE) the chain is on the extracellular side. The helical transmembrane segment at 669–689 (IGWLPLAAFVVFVVGFSLGFG) threads the bilayer. Topologically, residues 690 to 703 (PIPWLMMGEILPGK) are cytoplasmic. The chain crosses the membrane as a helical span at residues 704–724 (IRGSAASVATAFNWSCTFVVT). Over 725-737 (KTFADITASIGNH) the chain is Extracellular. A helical transmembrane segment spans residues 738–758 (GAFWMFGSICIVGLLFVIVYV). Residues 759 to 793 (PETQGKSLEDIERKMMGRVRRMSSVANIKPLSFNM) lie on the Cytoplasmic side of the membrane.

This sequence belongs to the major facilitator superfamily. Sugar transporter (TC 2.A.1.1) family. Trehalose transporter subfamily.

Its subcellular location is the cell membrane. Functionally, high-capacity facilitative transporter for trehalose. Does not transport maltose, sucrose or lactose. Mediates the bidirectional transfer of trehalose. Responsible for the transport of trehalose synthesized in the fat body and the incorporation of trehalose into other tissues that require a carbon source, thereby regulating trehalose levels in the hemolymph. This Anopheles gambiae (African malaria mosquito) protein is Facilitated trehalose transporter Tret1.